Reading from the N-terminus, the 356-residue chain is tRNA-specific 2-thiouridylase MnmA 1 (356 aa).

ATP contacts are provided by residues 8–15 and methionine 34; that span reads GMSGGVDS. Catalysis depends on cysteine 103, which acts as the Nucleophile. Cysteines 103 and 199 form a disulfide. Glycine 127 is an ATP binding site. An interaction with tRNA region spans residues 149-151; it reads KDQ. The active-site Cysteine persulfide intermediate is the cysteine 199. The tract at residues 305–306 is interaction with tRNA; that stretch reads RY.

Belongs to the MnmA/TRMU family.

Its subcellular location is the cytoplasm. It carries out the reaction S-sulfanyl-L-cysteinyl-[protein] + uridine(34) in tRNA + AH2 + ATP = 2-thiouridine(34) in tRNA + L-cysteinyl-[protein] + A + AMP + diphosphate + H(+). Functionally, catalyzes the 2-thiolation of uridine at the wobble position (U34) of tRNA, leading to the formation of s(2)U34. The chain is tRNA-specific 2-thiouridylase MnmA 1 from Clostridium botulinum (strain Loch Maree / Type A3).